The primary structure comprises 502 residues: MSDLRETRLEKAASLRKVGKDPYALNFHPTHKTAELQSDHKDLPNGQDREIKVAVAGRVLSRRVMGKLAFFTLLDESGSIQLFLEKATLEEFDTSENQVSSFKQITDFVDAGDWLGVNGILRRTDRGELSIKVHSWKILCKSLQPLPDKWHGLADIEKRYRQRYLDLVVNPDSRKTFRRRALTVSAIRRWLDERSFLEIETPVLQSAAGGADARPFITHHNTFDIPLFLRIATELHLKRLVVGGFERVYELGRIFRNEGISTRHNPEFTSVEIYQAFADYNQMMDLTEELISSVCIEICGSTKISYQDVSLDLTPPWRRVTMQELVLEATGIDFDNFDGDQEKASSEMINLGLEVPSTADSVGRLMNEAFEQKVEPNLIQPTFVIDYPIDISPLARKHRCKEDMVERFELFIAGRETANAFSELIDPIDQRERLLAQQIRKNEGDIEAHSLDEDFLNALEVGMPPTGGLGIGIDRLVMLLTDSPSIRDVIAFPLLRPDSGSQ.

Residues glutamate 409 and glutamate 416 each coordinate Mg(2+).

Belongs to the class-II aminoacyl-tRNA synthetase family. As to quaternary structure, homodimer. Requires Mg(2+) as cofactor.

It localises to the cytoplasm. The enzyme catalyses tRNA(Lys) + L-lysine + ATP = L-lysyl-tRNA(Lys) + AMP + diphosphate. The polypeptide is Lysine--tRNA ligase (Prochlorococcus marinus (strain SARG / CCMP1375 / SS120)).